Reading from the N-terminus, the 444-residue chain is CCA-adding enzyme (444 aa).

Positions 57 and 60 each coordinate ATP. 2 residues coordinate CTP: Ser57 and Arg60. The Mg(2+) site is built by Asp69, Asp71, and Asp124. Positions 147, 168, and 177 each coordinate ATP. Positions 147, 168, and 177 each coordinate CTP.

Belongs to the tRNA nucleotidyltransferase/poly(A) polymerase family. Archaeal CCA-adding enzyme subfamily. In terms of assembly, homodimer. Requires Mg(2+) as cofactor.

It catalyses the reaction a tRNA precursor + 2 CTP + ATP = a tRNA with a 3' CCA end + 3 diphosphate. It carries out the reaction a tRNA with a 3' CCA end + 2 CTP + ATP = a tRNA with a 3' CCACCA end + 3 diphosphate. Its function is as follows. Catalyzes the addition and repair of the essential 3'-terminal CCA sequence in tRNAs without using a nucleic acid template. Adds these three nucleotides in the order of C, C, and A to the tRNA nucleotide-73, using CTP and ATP as substrates and producing inorganic pyrophosphate. tRNA 3'-terminal CCA addition is required both for tRNA processing and repair. Also involved in tRNA surveillance by mediating tandem CCA addition to generate a CCACCA at the 3' terminus of unstable tRNAs. While stable tRNAs receive only 3'-terminal CCA, unstable tRNAs are marked with CCACCA and rapidly degraded. The sequence is that of CCA-adding enzyme from Methanococcus maripaludis (strain DSM 14266 / JCM 13030 / NBRC 101832 / S2 / LL).